We begin with the raw amino-acid sequence, 550 residues long: Arginine--tRNA ligase (550 aa).

Positions 124 to 134 (ANPTGPLHVGH) match the 'HIGH' region motif.

This sequence belongs to the class-I aminoacyl-tRNA synthetase family. In terms of assembly, monomer.

The protein localises to the cytoplasm. It carries out the reaction tRNA(Arg) + L-arginine + ATP = L-arginyl-tRNA(Arg) + AMP + diphosphate. The polypeptide is Arginine--tRNA ligase (Desulfovibrio desulfuricans (strain ATCC 27774 / DSM 6949 / MB)).